The chain runs to 518 residues: Cytochrome P450 704C1 (518 aa).

Helical transmembrane passes span 5–25 and 299–319; these read ILTM…WIAS and VILN…SWFI. C461 contacts heme.

Belongs to the cytochrome P450 family. The cofactor is heme.

The protein resides in the membrane. This Pinus taeda (Loblolly pine) protein is Cytochrome P450 704C1 (CYP704C1).